A 171-amino-acid polypeptide reads, in one-letter code: UPF0398 protein spyM18_1659 (171 aa).

Belongs to the UPF0398 family.

The protein is UPF0398 protein spyM18_1659 of Streptococcus pyogenes serotype M18 (strain MGAS8232).